Here is a 191-residue protein sequence, read N- to C-terminus: Elongation factor P (191 aa).

Lys-34 is modified (N6-(3,6-diaminohexanoyl)-5-hydroxylysine).

Belongs to the elongation factor P family. In terms of processing, may be beta-lysylated on the epsilon-amino group of Lys-34 by the combined action of EpmA and EpmB, and then hydroxylated on the C5 position of the same residue by EpmC (if this protein is present). Lysylation is critical for the stimulatory effect of EF-P on peptide-bond formation. The lysylation moiety may extend toward the peptidyltransferase center and stabilize the terminal 3-CCA end of the tRNA. Hydroxylation of the C5 position on Lys-34 may allow additional potential stabilizing hydrogen-bond interactions with the P-tRNA.

Its subcellular location is the cytoplasm. It participates in protein biosynthesis; polypeptide chain elongation. Functionally, involved in peptide bond synthesis. Alleviates ribosome stalling that occurs when 3 or more consecutive Pro residues or the sequence PPG is present in a protein, possibly by augmenting the peptidyl transferase activity of the ribosome. Modification of Lys-34 is required for alleviation. This Psychrobacter sp. (strain PRwf-1) protein is Elongation factor P.